The following is a 217-amino-acid chain: DNA repair protein homolog YobH (217 aa).

Residues 1 to 68 enclose the UmuC domain; it reads MAKAIQSSMW…RPLSKMWGIG (68 aa).

The protein belongs to the DNA polymerase type-Y family.

This is DNA repair protein homolog YobH (yobH) from Bacillus subtilis (strain 168).